A 296-amino-acid chain; its full sequence is Formamidopyrimidine-DNA glycosylase (296 aa).

Proline 2 functions as the Schiff-base intermediate with DNA in the catalytic mechanism. Glutamate 3 (proton donor) is an active-site residue. The Proton donor; for beta-elimination activity role is filled by lysine 61. DNA contacts are provided by histidine 104, arginine 128, and lysine 174. Residues 260–294 form an FPG-type zinc finger; it reads HAYGQQGQACDRCGSNIIREKFANRSSHFCPRCQL. The active-site Proton donor; for delta-elimination activity is arginine 284.

This sequence belongs to the FPG family. Monomer. The cofactor is Zn(2+).

It catalyses the reaction Hydrolysis of DNA containing ring-opened 7-methylguanine residues, releasing 2,6-diamino-4-hydroxy-5-(N-methyl)formamidopyrimidine.. The enzyme catalyses 2'-deoxyribonucleotide-(2'-deoxyribose 5'-phosphate)-2'-deoxyribonucleotide-DNA = a 3'-end 2'-deoxyribonucleotide-(2,3-dehydro-2,3-deoxyribose 5'-phosphate)-DNA + a 5'-end 5'-phospho-2'-deoxyribonucleoside-DNA + H(+). Functionally, involved in base excision repair of DNA damaged by oxidation or by mutagenic agents. Acts as a DNA glycosylase that recognizes and removes damaged bases. Has a preference for oxidized purines, such as 7,8-dihydro-8-oxoguanine (8-oxoG). Has AP (apurinic/apyrimidinic) lyase activity and introduces nicks in the DNA strand. Cleaves the DNA backbone by beta-delta elimination to generate a single-strand break at the site of the removed base with both 3'- and 5'-phosphates. The chain is Formamidopyrimidine-DNA glycosylase from Corynebacterium diphtheriae (strain ATCC 700971 / NCTC 13129 / Biotype gravis).